Reading from the N-terminus, the 264-residue chain is tRNA pseudouridine synthase A (264 aa).

The active-site Nucleophile is the aspartate 54. Substrate is bound at residue tyrosine 113.

This sequence belongs to the tRNA pseudouridine synthase TruA family. In terms of assembly, homodimer.

It carries out the reaction uridine(38/39/40) in tRNA = pseudouridine(38/39/40) in tRNA. Functionally, formation of pseudouridine at positions 38, 39 and 40 in the anticodon stem and loop of transfer RNAs. This is tRNA pseudouridine synthase A from Leptospira biflexa serovar Patoc (strain Patoc 1 / Ames).